The chain runs to 119 residues: Ribonuclease P protein component (119 aa).

The protein belongs to the RnpA family. Consists of a catalytic RNA component (M1 or rnpB) and a protein subunit.

The catalysed reaction is Endonucleolytic cleavage of RNA, removing 5'-extranucleotides from tRNA precursor.. In terms of biological role, RNaseP catalyzes the removal of the 5'-leader sequence from pre-tRNA to produce the mature 5'-terminus. It can also cleave other RNA substrates such as 4.5S RNA. The protein component plays an auxiliary but essential role in vivo by binding to the 5'-leader sequence and broadening the substrate specificity of the ribozyme. The protein is Ribonuclease P protein component of Corynebacterium diphtheriae (strain ATCC 700971 / NCTC 13129 / Biotype gravis).